The sequence spans 68 residues: MKASTLVVIFIVIFITISSFSIHDVQASGVEKREQKDCLKKLKLCKENKDCCSKSCKRRGTNIEKRCR.

The signal sequence occupies residues 1–27; it reads MKASTLVVIFIVIFITISSFSIHDVQA. A propeptide spanning residues 28-35 is cleaved from the precursor; that stretch reads SGVEKREQ. 3 disulfides stabilise this stretch: C38/C52, C45/C56, and C51/C67. An essential for stimulation of [3H]ryanodine binding to RYR1 region spans residues 57–59; sequence KRR.

The protein belongs to the scorpion calcin family. As to expression, expressed by the venom gland.

The protein resides in the secreted. Its function is as follows. This toxin only weakly stabilizes ryanodine receptor 1 (RyR1) opening in a long-lasting subconductance state (55% of the full conductance state obtained only at high concentrations (1 uM)). In addition, it has been shown to dose-dependently stimulate ryanodine binding to RyR1 with the lowest activity of all calcins (EC(50)=376 nM). It also augments the bell-shaped calcium-[3H]ryanodine binding curve that is maximal at about 10 uM calcium concentration. It binds a different site as ryanodine. It acts synergistically with caffeine. In contrast to other calcins, it does not trigger calcium release from sarcoplasmic vesicles even at high concentration (1 uM). In vivo, intracerebroventricular injection into mice induces neurotoxic symptoms, followed by death. This chain is Urocalcin, found in Urodacus yaschenkoi (Inland robust scorpion).